Reading from the N-terminus, the 126-residue chain is Holo-[acyl-carrier-protein] synthase (126 aa).

Residues aspartate 9 and glutamate 58 each coordinate Mg(2+).

The protein belongs to the P-Pant transferase superfamily. AcpS family. Mg(2+) is required as a cofactor.

The protein resides in the cytoplasm. The catalysed reaction is apo-[ACP] + CoA = holo-[ACP] + adenosine 3',5'-bisphosphate + H(+). Functionally, transfers the 4'-phosphopantetheine moiety from coenzyme A to a Ser of acyl-carrier-protein. In Aliivibrio salmonicida (strain LFI1238) (Vibrio salmonicida (strain LFI1238)), this protein is Holo-[acyl-carrier-protein] synthase.